Here is a 104-residue protein sequence, read N- to C-terminus: L-rhamnose mutarotase (104 aa).

Tyrosine 18 lines the substrate pocket. The active-site Proton donor is histidine 22. Residues tyrosine 41 and 76 to 77 contribute to the substrate site; that span reads WW. The segment at 85 to 104 is disordered; it reads PSNPDNSPISDALDPVFYLD.

The protein belongs to the rhamnose mutarotase family. Homodimer.

Its subcellular location is the cytoplasm. The enzyme catalyses alpha-L-rhamnose = beta-L-rhamnose. It functions in the pathway carbohydrate metabolism; L-rhamnose metabolism. In terms of biological role, involved in the anomeric conversion of L-rhamnose. This is L-rhamnose mutarotase from Pectobacterium atrosepticum (strain SCRI 1043 / ATCC BAA-672) (Erwinia carotovora subsp. atroseptica).